Reading from the N-terminus, the 134-residue chain is MENKKTIYFLCTGNSCRSQMAEAWGKKYLGDNWNVYSAGIEAHGVNPNAIKAMNEVNIDITNQTSDIIDANILNRADLVVTLCSHADSVCPSTPPDVNRVHWGFDDPAGKEWSEFQRVRDEIGERIKRFSETGE.

Residues cysteine 11, cysteine 83, and cysteine 90 each act as nucleophile in the active site. Disulfide bonds link cysteine 11/cysteine 83 and cysteine 83/cysteine 90.

The protein belongs to the low molecular weight phosphotyrosine protein phosphatase family. Thioredoxin-coupled ArsC subfamily.

Its subcellular location is the cytoplasm. The enzyme catalyses arsenate + [thioredoxin]-dithiol + H(+) = arsenite + [thioredoxin]-disulfide + H2O. Functionally, catalyzes the reduction of arsenate [As(V)] to arsenite [As(III)]. This Bacillus cereus (strain AH187) protein is Arsenate reductase.